The primary structure comprises 398 residues: MTLITEVRLRKILDSRGNPTVEAEVRTENGGFGRGAAPSGASTGEYEAVERPAEEAIAQARELAVPRIEGQVYAGDQRGVDNALHGADGTDDFSEIGANSAVAISMAAAKAAADVLGAPLYQHLGGAFRGRDFPVPLGNVIGGGEHAADATHIQEFLAAPVGAPSVADAVFANAKVHGEVQRQLDERGVPAAKGDEGAWAPSIDDSEAFEIMEEAIAAVEDEVGFEIRFGLDVAGAELYEDGVYHYGDETRSPDEQVAYIADLVEEYNLVYVEDPLDEDDFSGFAELTERVGDRTLICGDDLFVTNTERLQRGIDDGAANSILIKPNQIGTLSDAFDAIELATRNGYDPVVSHRSGETEDTTIAHLAVATDAPFIKTGAVGGERTAKLNELIRIEANA.

A (2R)-2-phosphoglycerate-binding site is contributed by Gln-154. Glu-196 functions as the Proton donor in the catalytic mechanism. 3 residues coordinate Mg(2+): Asp-232, Glu-273, and Asp-300. (2R)-2-phosphoglycerate-binding residues include Lys-325, Arg-354, Ser-355, and Lys-376. Lys-325 acts as the Proton acceptor in catalysis.

It belongs to the enolase family. The cofactor is Mg(2+).

Its subcellular location is the cytoplasm. It is found in the secreted. It localises to the cell surface. It carries out the reaction (2R)-2-phosphoglycerate = phosphoenolpyruvate + H2O. It participates in carbohydrate degradation; glycolysis; pyruvate from D-glyceraldehyde 3-phosphate: step 4/5. Catalyzes the reversible conversion of 2-phosphoglycerate (2-PG) into phosphoenolpyruvate (PEP). It is essential for the degradation of carbohydrates via glycolysis. The polypeptide is Enolase (Natronomonas pharaonis (strain ATCC 35678 / DSM 2160 / CIP 103997 / JCM 8858 / NBRC 14720 / NCIMB 2260 / Gabara) (Halobacterium pharaonis)).